The following is a 349-amino-acid chain: Anthranilate phosphoribosyltransferase (349 aa).

5-phospho-alpha-D-ribose 1-diphosphate-binding positions include Gly81, 84-85 (GD), Thr89, 91-94 (NVST), 109-117 (KHGNRAASS), and Ala121. Gly81 serves as a coordination point for anthranilate. Ser93 is a Mg(2+) binding site. Asn112 contacts anthranilate. Arg167 is a binding site for anthranilate. Mg(2+)-binding residues include Asp226 and Glu227.

It belongs to the anthranilate phosphoribosyltransferase family. As to quaternary structure, homodimer. Mg(2+) serves as cofactor.

The catalysed reaction is N-(5-phospho-beta-D-ribosyl)anthranilate + diphosphate = 5-phospho-alpha-D-ribose 1-diphosphate + anthranilate. The protein operates within amino-acid biosynthesis; L-tryptophan biosynthesis; L-tryptophan from chorismate: step 2/5. Its function is as follows. Catalyzes the transfer of the phosphoribosyl group of 5-phosphorylribose-1-pyrophosphate (PRPP) to anthranilate to yield N-(5'-phosphoribosyl)-anthranilate (PRA). The chain is Anthranilate phosphoribosyltransferase from Methylocella silvestris (strain DSM 15510 / CIP 108128 / LMG 27833 / NCIMB 13906 / BL2).